The primary structure comprises 475 residues: Subtilisin-like protease PopC (475 aa).

Disordered regions lie at residues 1–27 and 57–106; these read MKSYLLVPKESIETQARVGPRGTEQGE and TLPG…QTGA. The Peptidase S8 domain occupies 165–475; that stretch reads NRGMSSLAER…KTGKGLAVFR (311 aa). Catalysis depends on charge relay system residues Asp201, His243, and Ser423.

This sequence belongs to the peptidase S8 family. Interacts with PopD in non-starving cells.

It is found in the cytoplasm. Its subcellular location is the periplasm. It localises to the secreted. Its activity is regulated as follows. In non-starving cells, secretion and protease activity are inhibited by formation of a cytoplasmic complex with PopD. In response to starvation, PopD is degraded in a RelA- and FtsH(D)-dependent manner, thereby releasing pre-formed PopC for secretion. Secreted and active during starvation, and rapidly degraded upon secretion. Secretion is significantly and reversibly reduced by carbonyl cyanide m-chlorophenyl hydrazine (CCCP), which dissipates or reduces the proton motive force (PMF), and by nigericin, which affects the pH gradient. Functionally, required for fruiting body formation, a multicellular developmental program that is induced in response to starvation. Acts as a subtilisin-like protease that directly cleaves the CsgA precursor protein (p25) on the cell surface to generate the intercellular C-signal protein (p17) in starving cells. Preferentially acts in cis, i.e. PopC secreted by a cell only cleaves p25 on that cell. May also be important for processing of other protein(s) that are important for development. This chain is Subtilisin-like protease PopC, found in Myxococcus xanthus (strain DK1622).